The sequence spans 583 residues: L-galactono-1,4-lactone dehydrogenase 2, mitochondrial (583 aa).

The N-terminal 36 residues, 1 to 36 (MRRLLLAGILRRASSSPSSHHHLHLVRALSASSPLP), are a transit peptide targeting the mitochondrion. A propeptide spans 37–78 (ASDADLRKYAGYALLLLGCGAATYYSFPLPPDALHKKAVPFK) (removed in mature form). The chain crosses the membrane as a helical span at residues 45 to 61 (YAGYALLLLGCGAATYY). The FAD-binding PCMH-type domain maps to 95-266 (THEVHTRVLL…AEVTLQCVER (172 aa)).

FAD serves as cofactor.

The protein localises to the mitochondrion membrane. The catalysed reaction is L-galactono-1,4-lactone + 4 Fe(III)-[cytochrome c] = L-dehydroascorbate + 4 Fe(II)-[cytochrome c] + 5 H(+). Its pathway is cofactor biosynthesis; L-ascorbate biosynthesis. Involved in the biosynthesis of ascorbic acid. In Oryza sativa subsp. japonica (Rice), this protein is L-galactono-1,4-lactone dehydrogenase 2, mitochondrial (GLDH2).